The chain runs to 82 residues: MAAKKEFDIFTHELVPEHRILSEEEKEELLRKYRIKISQLPQIKASDPAVVALGAKPGDVLEIKRKSPTAGYYYYYRLVVED.

This sequence belongs to the archaeal Rpo5/eukaryotic RPB5 RNA polymerase subunit family. As to quaternary structure, part of the RNA polymerase complex.

It is found in the cytoplasm. It carries out the reaction RNA(n) + a ribonucleoside 5'-triphosphate = RNA(n+1) + diphosphate. In terms of biological role, DNA-dependent RNA polymerase (RNAP) catalyzes the transcription of DNA into RNA using the four ribonucleoside triphosphates as substrates. The chain is DNA-directed RNA polymerase subunit Rpo5 from Thermococcus onnurineus (strain NA1).